Here is a 394-residue protein sequence, read N- to C-terminus: S-adenosylmethionine synthase (394 aa).

Position 15 (histidine 15) interacts with ATP. A Mg(2+)-binding site is contributed by aspartate 17. K(+) is bound at residue glutamate 43. Residues glutamate 56 and glutamine 99 each coordinate L-methionine. The flexible loop stretch occupies residues 99-109 (QSPDIALGVNK). Residues 173–175 (DGK), 239–240 (RF), aspartate 248, 254–255 (RK), alanine 271, and lysine 275 each bind ATP. Position 248 (aspartate 248) interacts with L-methionine. Lysine 279 contacts L-methionine.

The protein belongs to the AdoMet synthase family. As to quaternary structure, homotetramer; dimer of dimers. It depends on Mg(2+) as a cofactor. The cofactor is K(+).

The protein localises to the cytoplasm. The enzyme catalyses L-methionine + ATP + H2O = S-adenosyl-L-methionine + phosphate + diphosphate. It participates in amino-acid biosynthesis; S-adenosyl-L-methionine biosynthesis; S-adenosyl-L-methionine from L-methionine: step 1/1. Functionally, catalyzes the formation of S-adenosylmethionine (AdoMet) from methionine and ATP. The overall synthetic reaction is composed of two sequential steps, AdoMet formation and the subsequent tripolyphosphate hydrolysis which occurs prior to release of AdoMet from the enzyme. The chain is S-adenosylmethionine synthase from Kosmotoga olearia (strain ATCC BAA-1733 / DSM 21960 / TBF 19.5.1).